Reading from the N-terminus, the 548-residue chain is MDSQRNLLVIALLFVSFMIWQAWEQDKNPQPQAQQTTQTTTTAAGSAADQGVPASGQGKLISVKTDVLDLTINTRGGDVEQALLPAYPKELNSTQPFQLLETSPQFIYQAQSGLTGRDGPDNPANGPRPLYNVEKDAYVLAEGQNELQVPMTYTDAAGNTFTKTFVLKRGDYAVNVNYNVQNAGEKPLEISTFGQLKQSITLPPHLDTGSSNFALHTFRGAAYSTPDEKYEKYKFDTIADNENLNISSKGGWVAMLQQYFATAWIPHNDGTNNFYTANLGNGIAAIGYKSQPVLVQPGQTGAMNSTLWVGPEIQDKMAAVAPHLDLTVDYGWLWFISQPLFKLLKWIHSFVGNWGFSIIIITFIVRGIMYPLTKAQYTSMAKMRMLQPKIQAMRERLGDDKQRISQEMMALYKAEKVNPLGGCFPLLIQMPIFLALYYMLMGSVELRQAPFALWIHDLSAQDPYYILPILMGVTMFFIQKMSPTTVTDPMQQKIMTFMPVIFTVFFLWFPSGLVLYYIVSNLVTIIQQQLIYRGLEKRGLHSREKKKS.

The chain crosses the membrane as a helical span at residues 6 to 26 (NLLVIALLFVSFMIWQAWEQD). The segment at 28 to 55 (NPQPQAQQTTQTTTTAAGSAADQGVPAS) is disordered. Residues 30 to 50 (QPQAQQTTQTTTTAAGSAADQ) show a composition bias toward low complexity. 4 helical membrane passes run 350-370 (FVGNWGFSIIIITFIVRGIMY), 420-440 (LGGCFPLLIQMPIFLALYYML), 458-478 (LSAQDPYYILPILMGVTMFFI), and 499-519 (PVIFTVFFLWFPSGLVLYYIV).

The protein belongs to the OXA1/ALB3/YidC family. Type 1 subfamily. In terms of assembly, interacts with the Sec translocase complex via SecD. Specifically interacts with transmembrane segments of nascent integral membrane proteins during membrane integration.

The protein resides in the cell inner membrane. Required for the insertion and/or proper folding and/or complex formation of integral membrane proteins into the membrane. Involved in integration of membrane proteins that insert both dependently and independently of the Sec translocase complex, as well as at least some lipoproteins. Aids folding of multispanning membrane proteins. The polypeptide is Membrane protein insertase YidC (Escherichia coli O127:H6 (strain E2348/69 / EPEC)).